A 417-amino-acid chain; its full sequence is Phosphoglycerate kinase 1 (417 aa).

Ser2 is subject to N-acetylserine. Ser2 and Ser4 each carry phosphoserine. The residue at position 6 (Lys6) is an N6-succinyllysine. N6-acetyllysine is present on Lys11. The (2R)-3-phosphoglycerate site is built by Val23, Asp24, Phe25, Asn26, Gln38, and Arg39. Residues 38–43 (QRIKAA) are mitochondrial targeting region exposed following cis-trans isomerization by PIN1 and recognized by the TOM complex for mitochondrial translocation of the protein. Position 48 is an N6-acetyllysine; alternate (Lys48). Lys48 carries the post-translational modification N6-succinyllysine; alternate. Residues Ser62, His63, Gly65, and Arg66 each coordinate (2R)-3-phosphoglycerate. The residue at position 75 (Lys75) is an N6-acetyllysine. Tyr76 is modified (phosphotyrosine). An N6-acetyllysine mark is found at Lys86 and Lys91. Lys97 is subject to N6-acetyllysine; alternate. N6-(2-hydroxyisobutyryl)lysine; alternate is present on Lys97. Residues Leu122 and Arg123 each coordinate (2R)-3-phosphoglycerate. An N6-acetyllysine; alternate modification is found at Lys131. N6-malonyllysine; alternate is present on Lys131. Position 146 is an N6-acetyllysine (Lys146). Residues His170 and Arg171 each contribute to the (2R)-3-phosphoglycerate site. N6-succinyllysine is present on Lys191. Residue Tyr196 is modified to Phosphotyrosine. Lys199 is modified (N6-acetyllysine). Residue Ser203 is modified to Phosphoserine. Gly214 contributes to the ADP binding site. Gly214 serves as a coordination point for CDP. AMP contacts are provided by Ala215 and Lys216. Ala215 serves as a coordination point for ATP. Ala215 lines the Mg(2+) pocket. Lys216 carries the post-translational modification N6-(2-hydroxyisobutyryl)lysine. Mg(2+) is bound by residues Ala218 and Asp219. Asp219 serves as a coordination point for CDP. Lys220 provides a ligand contact to AMP. Residue Lys220 coordinates ATP. An N6-(2-hydroxyisobutyryl)lysine modification is found at Lys220. Gly238 contacts ADP. Gly238 serves as a coordination point for CDP. Residue Gly239 coordinates AMP. ATP is bound at residue Gly239. Residues Lys267 and Lys291 each carry the N6-acetyllysine modification. An AMP-binding site is contributed by Gly313. Gly313 contacts ATP. Lys323 bears the N6-(2-hydroxyisobutyryl)lysine mark. CDP contacts are provided by Gly338, Val340, and Phe343. Phe343 contacts ADP. Glu344 contributes to the AMP binding site. An ATP-binding site is contributed by Glu344. Position 361 is an N6-acetyllysine (Lys361). Residues Asp375 and Thr376 each contribute to the ATP site. Asp375 contacts Mg(2+).

It belongs to the phosphoglycerate kinase family. In terms of assembly, monomer. Interacts with kinase MAPK1/ERK2; the interaction is direct, occurs under hypoxic conditions, and promotes its interaction with PIN1. Interacts with peptidyl-prolyl cis-trans isomerase PIN1; the interaction is direct, occurs under hypoxic conditions, and targets the protein to the mitochondrion by promoting interactions with the TOM complex. Interacts with mitochondrial circRNA mcPGK1 (via its 2nd stem-loop); the interaction is direct and targets the protein to the mitochondrion by promoting interactions with the TOM complex. Interacts with pyruvate dehydrogenase kinase PDK1; the interaction is direct, occurs under hypoxic conditions and leads to PDK1-mediated inhibition of pyruvate dehydrogenase complex activity. Mg(2+) is required as a cofactor. Post-translationally, phosphorylated at Ser-203 by MAPK1/ERK2 under hypoxic conditions, which promotes its mitochondrial targeting.

The protein localises to the cytoplasm. It localises to the cytosol. Its subcellular location is the mitochondrion matrix. The catalysed reaction is (2R)-3-phosphoglycerate + ATP = (2R)-3-phospho-glyceroyl phosphate + ADP. The enzyme catalyses L-seryl-[protein] + ATP = O-phospho-L-seryl-[protein] + ADP + H(+). Its pathway is carbohydrate degradation; glycolysis; pyruvate from D-glyceraldehyde 3-phosphate: step 2/5. Functionally, catalyzes one of the two ATP producing reactions in the glycolytic pathway via the reversible conversion of 1,3-diphosphoglycerate to 3-phosphoglycerate. Both L- and D- forms of purine and pyrimidine nucleotides can be used as substrates, but the activity is much lower on pyrimidines. In addition to its role as a glycolytic enzyme, it seems that PGK-1 acts as a polymerase alpha cofactor protein (primer recognition protein). Acts as a protein kinase when localized to the mitochondrion where it phosphorylates pyruvate dehydrogenase kinase PDK1 to inhibit pyruvate dehydrogenase complex activity and suppress the formation of acetyl-coenzyme A from pyruvate, and consequently inhibit oxidative phosphorylation and promote glycolysis. May play a role in sperm motility. The chain is Phosphoglycerate kinase 1 (PGK1) from Macaca fascicularis (Crab-eating macaque).